The sequence spans 218 residues: Probable nicotinate-nucleotide adenylyltransferase (218 aa).

It belongs to the NadD family.

The catalysed reaction is nicotinate beta-D-ribonucleotide + ATP + H(+) = deamido-NAD(+) + diphosphate. Its pathway is cofactor biosynthesis; NAD(+) biosynthesis; deamido-NAD(+) from nicotinate D-ribonucleotide: step 1/1. Functionally, catalyzes the reversible adenylation of nicotinate mononucleotide (NaMN) to nicotinic acid adenine dinucleotide (NaAD). In Syntrophotalea carbinolica (strain DSM 2380 / NBRC 103641 / GraBd1) (Pelobacter carbinolicus), this protein is Probable nicotinate-nucleotide adenylyltransferase.